We begin with the raw amino-acid sequence, 396 residues long: Obg-like ATPase 1 (396 aa).

Positions 23-283 (LKIGIVGLPN…MSAEEKQKYL (261 aa)) constitute an OBG-type G domain. Residue 32-37 (NVGKST) participates in ATP binding. Mg(2+)-binding residues include Ser-36 and Thr-56. Residue Leu-231 coordinates ATP. The Nuclear export signal signature appears at 267-274 (LELKLQDM). In terms of domain architecture, TGS spans 304–387 (QLEYFFTAGP…EDGDIIFFKF (84 aa)).

Belongs to the TRAFAC class OBG-HflX-like GTPase superfamily. OBG GTPase family. YchF/OLA1 subfamily. In terms of assembly, monomer. Mg(2+) serves as cofactor.

It is found in the cytoplasm. Its subcellular location is the nucleus. It localises to the nucleolus. Hydrolyzes ATP, and can also hydrolyze GTP with lower efficiency. Has lower affinity for GTP. In Gallus gallus (Chicken), this protein is Obg-like ATPase 1.